Reading from the N-terminus, the 380-residue chain is 1-deoxy-D-xylulose 5-phosphate reductoisomerase 2 (380 aa).

NADPH-binding residues include Ser-10, Gly-11, Ser-12, Ile-13, Gly-36, Lys-37, Asn-38, and Asn-120. Lys-121 is a 1-deoxy-D-xylulose 5-phosphate binding site. Glu-122 lines the NADPH pocket. Asp-146 contributes to the Mn(2+) binding site. Residues Ser-147, Glu-148, Ser-172, and His-195 each coordinate 1-deoxy-D-xylulose 5-phosphate. Glu-148 provides a ligand contact to Mn(2+). Residue Gly-201 coordinates NADPH. Residues Ser-208, Asn-213, Lys-214, and Glu-217 each contribute to the 1-deoxy-D-xylulose 5-phosphate site. Mn(2+) is bound at residue Glu-217.

Belongs to the DXR family. It depends on Mg(2+) as a cofactor. Mn(2+) serves as cofactor.

It catalyses the reaction 2-C-methyl-D-erythritol 4-phosphate + NADP(+) = 1-deoxy-D-xylulose 5-phosphate + NADPH + H(+). It functions in the pathway isoprenoid biosynthesis; isopentenyl diphosphate biosynthesis via DXP pathway; isopentenyl diphosphate from 1-deoxy-D-xylulose 5-phosphate: step 1/6. Functionally, catalyzes the NADPH-dependent rearrangement and reduction of 1-deoxy-D-xylulose-5-phosphate (DXP) to 2-C-methyl-D-erythritol 4-phosphate (MEP). This chain is 1-deoxy-D-xylulose 5-phosphate reductoisomerase 2, found in Bacillus anthracis.